Here is a 702-residue protein sequence, read N- to C-terminus: Ferrioxamine B receptor (702 aa).

The first 30 residues, 1 to 30 (MPLEMFMFATTRMALLIGGAIGGATFPLFA), serve as a signal peptide directing secretion. The TBDR plug domain occupies 55–168 (PDIETPQSVS…PGGIVALTSR (114 aa)). The TBDR beta-barrel domain maps to 173-702 (DAGGEVKLFA…SIVGSVSWAF (530 aa)).

This sequence belongs to the TonB-dependent receptor family.

It localises to the cell outer membrane. In terms of biological role, ferrioxamine binding and uptake, in association with the TonB protein. The chain is Ferrioxamine B receptor (foxA) from Salmonella typhimurium (strain LT2 / SGSC1412 / ATCC 700720).